Reading from the N-terminus, the 235-residue chain is NADH-quinone oxidoreductase subunit C (235 aa).

This sequence belongs to the complex I 30 kDa subunit family. As to quaternary structure, NDH-1 is composed of 14 different subunits. Subunits NuoB, C, D, E, F, and G constitute the peripheral sector of the complex.

It localises to the cell membrane. The catalysed reaction is a quinone + NADH + 5 H(+)(in) = a quinol + NAD(+) + 4 H(+)(out). NDH-1 shuttles electrons from NADH, via FMN and iron-sulfur (Fe-S) centers, to quinones in the respiratory chain. The immediate electron acceptor for the enzyme in this species is believed to be a menaquinone. Couples the redox reaction to proton translocation (for every two electrons transferred, four hydrogen ions are translocated across the cytoplasmic membrane), and thus conserves the redox energy in a proton gradient. This is NADH-quinone oxidoreductase subunit C from Mycolicibacterium paratuberculosis (strain ATCC BAA-968 / K-10) (Mycobacterium paratuberculosis).